The following is a 541-amino-acid chain: Cytochrome bc1 complex cytochrome b subunit (541 aa).

The chain crosses the membrane as a helical span at residues 36–56 (FLLGEIALYSFIILILTGVYL). The heme site is built by H105 and H119. 3 helical membrane-spanning segments follow: residues 109–129 (ALMF…TGAF), 137–157 (WVIG…GYSL), and 169–189 (IMSA…WMIF). Positions 206 and 221 each coordinate heme. 5 helical membrane-spanning segments follow: residues 207–227 (VLII…LVWY), 256–276 (SVAF…VTTI), 325–345 (VFWV…YPWI), 371–391 (LGVM…NDIW), and 408–428 (IGLI…CIGL).

It belongs to the cytochrome b family. The cytochrome bc1 complex is composed of a cytochrome b (QcrB), the Rieske protein iron-sulfur (QcrA) and a diheme cytochrome c (QcrC) subunit. It depends on heme as a cofactor.

The protein resides in the cell membrane. The enzyme catalyses a quinol + 2 Fe(III)-[cytochrome c](out) = a quinone + 2 Fe(II)-[cytochrome c](out) + 2 H(+)(out). Cytochrome b subunit of the cytochrome bc1 complex, an essential component of the respiratory electron transport chain required for ATP synthesis. The bc1 complex catalyzes the oxidation of menaquinol and the reduction of cytochrome c in the respiratory chain. The bc1 complex operates through a Q-cycle mechanism that couples electron transfer to generation of the proton gradient that drives ATP synthesis. In Corynebacterium efficiens (strain DSM 44549 / YS-314 / AJ 12310 / JCM 11189 / NBRC 100395), this protein is Cytochrome bc1 complex cytochrome b subunit (qcrB).